An 86-amino-acid polypeptide reads, in one-letter code: Small ribosomal subunit protein bS20 (86 aa).

A compositionally biased stretch (basic and acidic residues) spans 1-16; that stretch reads MANIKSQEKRIRTNER. The disordered stretch occupies residues 1-25; it reads MANIKSQEKRIRTNERRRLRNQSVK.

Belongs to the bacterial ribosomal protein bS20 family.

Its function is as follows. Binds directly to 16S ribosomal RNA. The chain is Small ribosomal subunit protein bS20 from Mycobacterium sp. (strain JLS).